Here is a 204-residue protein sequence, read N- to C-terminus: Imidazoleglycerol-phosphate dehydratase (204 aa).

It belongs to the imidazoleglycerol-phosphate dehydratase family.

The protein resides in the cytoplasm. The enzyme catalyses D-erythro-1-(imidazol-4-yl)glycerol 3-phosphate = 3-(imidazol-4-yl)-2-oxopropyl phosphate + H2O. It participates in amino-acid biosynthesis; L-histidine biosynthesis; L-histidine from 5-phospho-alpha-D-ribose 1-diphosphate: step 6/9. In Corynebacterium urealyticum (strain ATCC 43042 / DSM 7109), this protein is Imidazoleglycerol-phosphate dehydratase.